Here is a 1763-residue protein sequence, read N- to C-terminus: Genome polyprotein (1763 aa).

One can recognise an SF3 helicase domain in the interval aspartate 458–threonine 614. Residue glycine 484 to threonine 491 coordinates ATP. At tyrosine 984 the chain carries O-(5'-phospho-RNA)-tyrosine. One can recognise a Peptidase C24 domain in the interval glycine 1073–aspartate 1229. Catalysis depends on for 3CLpro activity residues histidine 1110, glutamate 1131, and cysteine 1193. A RdRp catalytic domain is found at alanine 1478–serine 1603.

Protein p32: Homodimer. Interacts with NTPase, protein p30 and protease-polymerase p76. In terms of assembly, interacts with capsid protein VP1 and protease-polymerase p76. As to quaternary structure, homooligomer. Interacts with Vpg, protein p32 and may interact with capsid protein VP1. Post-translationally, specific enzymatic cleavages in vivo yield mature proteins. Pro-Pol is first autocatalytically cleaved, then processes the whole polyprotein. In terms of processing, VPg is uridylylated by the polymerase and is covalently attached to the 5'-end of the polyadenylated genomic and subgenomic RNAs. This uridylylated form acts as a nucleotide-peptide primer for the polymerase.

The enzyme catalyses a ribonucleoside 5'-triphosphate + H2O = a ribonucleoside 5'-diphosphate + phosphate + H(+). It catalyses the reaction RNA(n) + a ribonucleoside 5'-triphosphate = RNA(n+1) + diphosphate. It carries out the reaction Endopeptidase with a preference for cleavage when the P1 position is occupied by Glu-|-Xaa and the P1' position is occupied by Gly-|-Yaa.. In terms of biological role, NTPase presumably plays a role in replication. Despite having similarities with helicases, does not seem to display any helicase activity. Functionally, viral genome-linked protein is covalently linked to the 5'-end of the positive-strand, negative-strand genomic RNAs and subgenomic RNA. Acts as a genome-linked replication primer. May recruit ribosome to viral RNA thereby promoting viral proteins translation. Its function is as follows. The protease activity processes the polyprotein: Pro-Pol is first released by autocleavage, then all other proteins are cleaved. Cleaves host translation initiation factor eIF4G1, eIF4G2 and PABP1 thereby inducing a shutdown of host protein synthesis. This shutdown may not prevent viral mRNA from being translated since viral Vpg replaces the cap. May cleave host polyadenylate-binding protein thereby inhibiting cellular translation. Seems to act as a RNase and degrades host Pol II-driven mRNAs with the help of host XRN1. Inhibits the integrated stress response (ISR) in the infected cell by cleaving host G3BP1 and G3BP2. Stress granule formation is thus inhibited, which allows protein synthesis and viral replication. The RNA-directed RNA polymerase activity replicates genomic and antigenomic viral RNA by recognizing specific signals. Also transcribes a subgenomic mRNA by initiating RNA synthesis internally on antigenomic RNA. This sgRNA codes for structural proteins. Catalyzes the covalent attachment VPg with viral RNAs. Selectively decays the mRNA of host interferon receptor IFNAR1. This is Genome polyprotein from Feline calicivirus (FCV).